Here is a 293-residue protein sequence, read N- to C-terminus: ATP synthase subunit a (293 aa).

The next 6 membrane-spanning stretches (helical) occupy residues 40-60 (DSLF…WLAA), 97-117 (LFVA…NALD), 151-171 (DLNV…YYGI), 188-208 (FHAH…LNLI), 225-245 (MFAG…WTGF), and 264-284 (AIFH…LTLV).

It belongs to the ATPase A chain family. As to quaternary structure, F-type ATPases have 2 components, CF(1) - the catalytic core - and CF(0) - the membrane proton channel. CF(1) has five subunits: alpha(3), beta(3), gamma(1), delta(1), epsilon(1). CF(0) has three main subunits: a(1), b(2) and c(9-12). The alpha and beta chains form an alternating ring which encloses part of the gamma chain. CF(1) is attached to CF(0) by a central stalk formed by the gamma and epsilon chains, while a peripheral stalk is formed by the delta and b chains.

The protein resides in the cell inner membrane. In terms of biological role, key component of the proton channel; it plays a direct role in the translocation of protons across the membrane. The polypeptide is ATP synthase subunit a (Bordetella bronchiseptica (strain ATCC BAA-588 / NCTC 13252 / RB50) (Alcaligenes bronchisepticus)).